The primary structure comprises 255 residues: Hydroxyacylglutathione hydrolase (255 aa).

His-56, His-58, Asp-60, His-61, His-114, Asp-133, and His-171 together coordinate Zn(2+).

This sequence belongs to the metallo-beta-lactamase superfamily. Glyoxalase II family. Monomer. Zn(2+) serves as cofactor.

The enzyme catalyses an S-(2-hydroxyacyl)glutathione + H2O = a 2-hydroxy carboxylate + glutathione + H(+). Its pathway is secondary metabolite metabolism; methylglyoxal degradation; (R)-lactate from methylglyoxal: step 2/2. In terms of biological role, thiolesterase that catalyzes the hydrolysis of S-D-lactoyl-glutathione to form glutathione and D-lactic acid. The sequence is that of Hydroxyacylglutathione hydrolase from Rhodopseudomonas palustris (strain BisB5).